The following is a 127-amino-acid chain: Large ribosomal subunit protein eL8 (127 aa).

This sequence belongs to the eukaryotic ribosomal protein eL8 family. In terms of assembly, part of the 50S ribosomal subunit. Probably part of the RNase P complex.

Its subcellular location is the cytoplasm. Functionally, multifunctional RNA-binding protein that recognizes the K-turn motif in ribosomal RNA, the RNA component of RNase P, box H/ACA, box C/D and box C'/D' sRNAs. The chain is Large ribosomal subunit protein eL8 from Desulfurococcus amylolyticus (strain DSM 18924 / JCM 16383 / VKM B-2413 / 1221n) (Desulfurococcus kamchatkensis).